We begin with the raw amino-acid sequence, 309 residues long: Putative taste receptor type 2 member 33 (309 aa).

Position 1 (methionine 1) is a topological domain, extracellular. The helical transmembrane segment at valine 2–phenylalanine 22 threads the bilayer. Residues serine 23–glutamine 46 are Cytoplasmic-facing. The chain crosses the membrane as a helical span at residues isoleucine 47–tyrosine 67. Residues alanine 68–asparagine 86 are Extracellular-facing. N-linked (GlcNAc...) asparagine glycosylation is present at asparagine 86. A helical membrane pass occupies residues isoleucine 87–leucine 107. Residues leucine 108 to serine 127 lie on the Cytoplasmic side of the membrane. Residues valine 128 to threonine 148 traverse the membrane as a helical segment. The Extracellular segment spans residues methionine 149–threonine 181. Asparagine 161 carries an N-linked (GlcNAc...) asparagine glycan. The chain crosses the membrane as a helical span at residues leucine 182–leucine 202. Over cysteine 203 to glutamine 229 the chain is Cytoplasmic. Residues threonine 230 to tryptophan 250 form a helical membrane-spanning segment. Over asparagine 251–proline 259 the chain is Extracellular. A helical membrane pass occupies residues valine 260–isoleucine 280. Topologically, residues tryptophan 281–proline 309 are cytoplasmic.

This sequence belongs to the G-protein coupled receptor T2R family.

The protein localises to the membrane. Putative taste receptor which may play a role in the perception of bitterness. The chain is Putative taste receptor type 2 member 33 from Homo sapiens (Human).